Reading from the N-terminus, the 143-residue chain is MFMGEYHHTIDDKGRLIIPARFREELGVKFVITKGLDNCLFVYPMQGWAEMEQKLRSLPFTRADARAFVRFFFSGATECELDRQGRILLPGNLREYARLDKEVVVVGVSTRVEIWSRSRWEEYCRETSDQYEALAEKMVDFDI.

2 consecutive SpoVT-AbrB domains span residues 5-47 (EYHH…PMQG) and 76-119 (ATEC…SRSR).

Belongs to the MraZ family. In terms of assembly, forms oligomers.

It is found in the cytoplasm. The protein localises to the nucleoid. The protein is Transcriptional regulator MraZ of Moorella thermoacetica (strain ATCC 39073 / JCM 9320).